The sequence spans 718 residues: Tensin-4 (718 aa).

The N-terminal stretch at 1 to 14 is a signal peptide; it reads MSSSLLTGGHVVSL. Disordered stretches follow at residues 188 to 244 and 272 to 437; these read RETR…GLRA and LPHS…AKDM. Residues 192–207 show a composition bias toward polar residues; sequence SSSNESLIFSGNQGRG. The span at 208–219 shows a compositional bias: low complexity; the sequence is SSPHTPSSLSNS. Phosphoserine is present on serine 230. Over residues 272-304 the composition is skewed to low complexity; sequence LPHSSLSSYPPSSRSLGSPASSSSSLHSLDRGS. Polar residues-rich tracts occupy residues 306–316, 337–349, 367–393, and 405–415; these read CVRSSDAQVPS, QASS…TNSM, PAQQ…QATK, and TSPSHLCQATK. The 108-residue stretch at 451 to 558 folds into the SH2 domain; that stretch reads WFKPSITREQ…ALPCKLTIPQ (108 aa). Residues 585 to 711 form the PTB domain; it reads CHTLYLTSVS…SQVISLVTAL (127 aa).

The protein belongs to the PTEN phosphatase protein family. As to quaternary structure, interacts (via SH2 domain) with Rho GTPase-activating protein DLC1 (via C-terminus); the interaction is independent of DLC1 tyrosine phosphorylation. Interacts with integrin ITGB1; the interaction displaces tensin TNS3 from the ITGB1 cytoplasmic tail and promotes ITGB1 stability. Interacts (via SH2 domain) with E3 ubiquitin-protein ligase CBL (phosphorylated on 'Tyr-781'); the interaction is enhanced in the presence of EGF and reduces interaction of CBL with EGFR. Interacts (via SH2 domain) with receptor tyrosine kinase MET (when phosphorylated); the interaction increases MET protein stability.

It is found in the cell junction. The protein resides in the focal adhesion. The protein localises to the cytoplasm. Its subcellular location is the cytoskeleton. Its function is as follows. Promotes EGF-induced cell migration by displacing tensin TNS3 from the cytoplasmic tail of integrin ITGB1 which results in dissociation of TNS3 from focal adhesions, disassembly of actin stress fibers and initiation of cell migration. Suppresses ligand-induced degradation of EGFR by reducing EGFR ubiquitination in the presence of EGF. Increases MET protein stability by inhibiting MET endocytosis and subsequent lysosomal degradation which leads to increased cell survival, proliferation and migration. The chain is Tensin-4 (Tns4) from Rattus norvegicus (Rat).